We begin with the raw amino-acid sequence, 597 residues long: Vacuolar protein sorting-associated protein 33A (597 aa).

The protein belongs to the STXBP/unc-18/SEC1 family. In terms of assembly, core component of at least two putative endosomal tethering complexes, the homotypic fusion and vacuole protein sorting (HOPS) complex and the class C core vacuole/endosome tethering (CORVET) complex. Their common core is composed of the class C Vps proteins VPS11, VPS16, VPS18 and VPS33A, which in HOPS further associates with VPS39 and VPS41 and in CORVET with VPS8 and TGFBRAP1. Interacts with RAB5C, UVRAG, STX17, MON1A and MON1B. Associates with adaptor protein complex 3 (AP-3) and clathrin. Interacts with PLEKHM1. As to expression, ubiquitous.

Its subcellular location is the cytoplasmic vesicle. It localises to the late endosome membrane. It is found in the lysosome membrane. The protein resides in the early endosome. The protein localises to the autophagosome. Its subcellular location is the clathrin-coated vesicle. Its function is as follows. Plays a role in vesicle-mediated protein trafficking to lysosomal compartments including the endocytic membrane transport and autophagic pathways. Believed to act as a core component of the putative HOPS and CORVET endosomal tethering complexes which are proposed to be involved in the Rab5-to-Rab7 endosome conversion probably implicating MON1A/B, and via binding SNAREs and SNARE complexes to mediate tethering and docking events during SNARE-mediated membrane fusion. The HOPS complex is proposed to be recruited to Rab7 on the late endosomal membrane and to regulate late endocytic, phagocytic and autophagic traffic towards lysosomes. The CORVET complex is proposed to function as a Rab5 effector to mediate early endosome fusion probably in specific endosome subpopulations. Required for fusion of endosomes and autophagosomes with lysosomes; the function is dependent on its association with VPS16 but not VIPAS39. The function in autophagosome-lysosome fusion implicates STX17 but not UVRAG. The polypeptide is Vacuolar protein sorting-associated protein 33A (Vps33a) (Rattus norvegicus (Rat)).